Consider the following 416-residue polypeptide: Probable protein phosphatase 2C 75 (416 aa).

Disordered regions lie at residues 1–20 and 32–51; these read MTEIYRTISTGRGDDVSPTK and RRQAAVFGEPSSSRNRDRTD. A PPM-type phosphatase domain is found at 108–411; it reads LYGIVSVMGR…DNISVVVIDL (304 aa). Residues aspartate 149, glycine 150, aspartate 337, and aspartate 402 each coordinate Mn(2+).

This sequence belongs to the PP2C family. Mg(2+) serves as cofactor. The cofactor is Mn(2+).

It catalyses the reaction O-phospho-L-seryl-[protein] + H2O = L-seryl-[protein] + phosphate. The enzyme catalyses O-phospho-L-threonyl-[protein] + H2O = L-threonyl-[protein] + phosphate. In terms of biological role, negative regulator of abscisic acid (ABA) responses during seed germination. The chain is Probable protein phosphatase 2C 75 (AHG1) from Arabidopsis thaliana (Mouse-ear cress).